The primary structure comprises 63 residues: Large ribosomal subunit protein uL29 (63 aa).

This sequence belongs to the universal ribosomal protein uL29 family.

The sequence is that of Large ribosomal subunit protein uL29 from Enterobacter sp. (strain 638).